Reading from the N-terminus, the 418-residue chain is Histidine--tRNA ligase (418 aa).

Belongs to the class-II aminoacyl-tRNA synthetase family.

The protein localises to the cytoplasm. The catalysed reaction is tRNA(His) + L-histidine + ATP = L-histidyl-tRNA(His) + AMP + diphosphate + H(+). This Methanococcus vannielii (strain ATCC 35089 / DSM 1224 / JCM 13029 / OCM 148 / SB) protein is Histidine--tRNA ligase.